Here is a 364-residue protein sequence, read N- to C-terminus: Phosphoserine aminotransferase (364 aa).

R46 provides a ligand contact to L-glutamate. Pyridoxal 5'-phosphate is bound by residues A80 to R81, W106, T157, D176, and Q199. An N6-(pyridoxal phosphate)lysine modification is found at K200. N241 to T242 provides a ligand contact to pyridoxal 5'-phosphate.

The protein belongs to the class-V pyridoxal-phosphate-dependent aminotransferase family. SerC subfamily. Homodimer. Requires pyridoxal 5'-phosphate as cofactor.

The protein resides in the cytoplasm. It carries out the reaction O-phospho-L-serine + 2-oxoglutarate = 3-phosphooxypyruvate + L-glutamate. The enzyme catalyses 4-(phosphooxy)-L-threonine + 2-oxoglutarate = (R)-3-hydroxy-2-oxo-4-phosphooxybutanoate + L-glutamate. Its pathway is amino-acid biosynthesis; L-serine biosynthesis; L-serine from 3-phospho-D-glycerate: step 2/3. It participates in cofactor biosynthesis; pyridoxine 5'-phosphate biosynthesis; pyridoxine 5'-phosphate from D-erythrose 4-phosphate: step 3/5. Catalyzes the reversible conversion of 3-phosphohydroxypyruvate to phosphoserine and of 3-hydroxy-2-oxo-4-phosphonooxybutanoate to phosphohydroxythreonine. The protein is Phosphoserine aminotransferase of Vibrio vulnificus (strain YJ016).